Reading from the N-terminus, the 836-residue chain is Periostin (836 aa).

Residues 1-21 (MIPFLPMFSLLLLLIVNPINA) form the signal peptide. Residues 40–94 (GPNVCALQQILGTKKKYFSTCKNWYKKSICGQKTTVLYECCPGYMRMEGMKGCPA) enclose the EMI domain. 5 disulfide bridges follow: C44/C80, C69/C333, C79/C92, C208/C311, and C467/C472. C60 carries the post-translational modification S-cysteinyl cysteine. FAS1 domains follow at residues 97–230 (PIDH…DRVL), 234–365 (GTSI…DQVL), 368–492 (DSAK…REII), and 496–628 (EKSL…DKLL). A glycan (N-linked (GlcNAc...) asparagine) is linked at N599.

In terms of assembly, homodimer. Interacts with BMP1 and fibronectin. Gamma-carboxylation is controversial. Gamma-carboxyglutamated; gamma-carboxyglutamate residues are formed by vitamin K dependent carboxylation; this may be required for calcium binding. According to a more recent report, does not contain vitamin K-dependent gamma-carboxyglutamate residues. In terms of tissue distribution, widely expressed with highest levels in aorta, stomach, lower gastrointestinal tract, placenta, uterus, thyroid tissue and breast. Expressed in the kidney. Expressed in the lung. Up-regulated in epithelial ovarian tumors. Not expressed in normal ovaries. Also highly expressed at the tumor periphery of lung carcinoma tissue but not within the tumor. Overexpressed in breast cancers.

The protein resides in the golgi apparatus. It localises to the secreted. The protein localises to the extracellular space. It is found in the extracellular matrix. In terms of biological role, induces cell attachment and spreading and plays a role in cell adhesion. Enhances incorporation of BMP1 in the fibronectin matrix of connective tissues, and subsequent proteolytic activation of lysyl oxidase LOX. The chain is Periostin (POSTN) from Homo sapiens (Human).